A 345-amino-acid polypeptide reads, in one-letter code: Phosphoribosylformylglycinamidine cyclo-ligase (345 aa).

It belongs to the AIR synthase family.

It is found in the cytoplasm. It carries out the reaction 2-formamido-N(1)-(5-O-phospho-beta-D-ribosyl)acetamidine + ATP = 5-amino-1-(5-phospho-beta-D-ribosyl)imidazole + ADP + phosphate + H(+). Its pathway is purine metabolism; IMP biosynthesis via de novo pathway; 5-amino-1-(5-phospho-D-ribosyl)imidazole from N(2)-formyl-N(1)-(5-phospho-D-ribosyl)glycinamide: step 2/2. The chain is Phosphoribosylformylglycinamidine cyclo-ligase from Cronobacter sakazakii (strain ATCC BAA-894) (Enterobacter sakazakii).